The primary structure comprises 304 residues: Glutaminase (304 aa).

Substrate is bound by residues Ser-63, Asn-114, Glu-158, Asn-165, Tyr-189, Tyr-240, and Val-258.

This sequence belongs to the glutaminase family. In terms of assembly, homotetramer.

It catalyses the reaction L-glutamine + H2O = L-glutamate + NH4(+). The sequence is that of Glutaminase from Shewanella loihica (strain ATCC BAA-1088 / PV-4).